Here is a 492-residue protein sequence, read N- to C-terminus: Bifunctional purine biosynthesis protein PurH (492 aa).

The MGS-like domain occupies 1-144 (MKKAILSVSN…KNYKHVTTIV (144 aa)).

Belongs to the PurH family.

It carries out the reaction (6R)-10-formyltetrahydrofolate + 5-amino-1-(5-phospho-beta-D-ribosyl)imidazole-4-carboxamide = 5-formamido-1-(5-phospho-D-ribosyl)imidazole-4-carboxamide + (6S)-5,6,7,8-tetrahydrofolate. The enzyme catalyses IMP + H2O = 5-formamido-1-(5-phospho-D-ribosyl)imidazole-4-carboxamide. It participates in purine metabolism; IMP biosynthesis via de novo pathway; 5-formamido-1-(5-phospho-D-ribosyl)imidazole-4-carboxamide from 5-amino-1-(5-phospho-D-ribosyl)imidazole-4-carboxamide (10-formyl THF route): step 1/1. It functions in the pathway purine metabolism; IMP biosynthesis via de novo pathway; IMP from 5-formamido-1-(5-phospho-D-ribosyl)imidazole-4-carboxamide: step 1/1. The chain is Bifunctional purine biosynthesis protein PurH from Staphylococcus aureus (strain USA300).